The primary structure comprises 427 residues: UPF0597 protein CD630_32320 (427 aa).

Belongs to the UPF0597 family.

This is UPF0597 protein CD630_32320 from Clostridioides difficile (strain 630) (Peptoclostridium difficile).